The sequence spans 318 residues: Pyrimidine-specific ribonucleoside hydrolase RihA (318 aa).

Residue H240 is part of the active site.

Belongs to the IUNH family. RihA subfamily.

Hydrolyzes cytidine or uridine to ribose and cytosine or uracil, respectively. The protein is Pyrimidine-specific ribonucleoside hydrolase RihA of Shewanella sp. (strain MR-4).